Reading from the N-terminus, the 341-residue chain is Aspartate carbamoyltransferase catalytic subunit (341 aa).

Arg-74 and Thr-75 together coordinate carbamoyl phosphate. Lys-102 is an L-aspartate binding site. Carbamoyl phosphate is bound by residues Arg-124, His-152, and Gln-155. Arg-190 and Arg-244 together coordinate L-aspartate. Positions 285 and 286 each coordinate carbamoyl phosphate.

It belongs to the aspartate/ornithine carbamoyltransferase superfamily. ATCase family. In terms of assembly, heterododecamer (2C3:3R2) of six catalytic PyrB chains organized as two trimers (C3), and six regulatory PyrI chains organized as three dimers (R2).

It catalyses the reaction carbamoyl phosphate + L-aspartate = N-carbamoyl-L-aspartate + phosphate + H(+). It functions in the pathway pyrimidine metabolism; UMP biosynthesis via de novo pathway; (S)-dihydroorotate from bicarbonate: step 2/3. Its function is as follows. Catalyzes the condensation of carbamoyl phosphate and aspartate to form carbamoyl aspartate and inorganic phosphate, the committed step in the de novo pyrimidine nucleotide biosynthesis pathway. This chain is Aspartate carbamoyltransferase catalytic subunit, found in Novosphingobium aromaticivorans (strain ATCC 700278 / DSM 12444 / CCUG 56034 / CIP 105152 / NBRC 16084 / F199).